A 576-amino-acid chain; its full sequence is (+)-alpha-terpineol synthase (576 aa).

5 residues coordinate (2E)-geranyl diphosphate: Arg286, Asp323, Asp327, Arg466, and Asn469. Mg(2+)-binding residues include Asp323 and Asp327. Residues 323 to 327 carry the DDXXD motif motif; sequence DDVYD. Mg(2+) is bound by residues Asn469, Thr473, and Glu477.

The protein belongs to the terpene synthase family. Tpsb subfamily. The cofactor is Mg(2+). Requires Mn(2+) as cofactor.

It catalyses the reaction (2E)-geranyl diphosphate + H2O = (R)-alpha-terpineol + diphosphate. Its function is as follows. Monoterpene synthase producing mainly (+)-alpha-terpineol (44%) and (-)-limonene (33.6%) and lower amounts of (E)-geraniol (5.9%), linalool (5.0%), myrcene (3.4%), (-)-alpha-pinene (3.3%), (+)-sabinene (3.0%) and alpha-terpinolene (1.6%). This is (+)-alpha-terpineol synthase from Santalum album (White sandalwood).